We begin with the raw amino-acid sequence, 279 residues long: NADPH-dependent 7-cyano-7-deazaguanine reductase (279 aa).

Substrate is bound at residue 86–88; sequence IES. Residue 88 to 89 coordinates NADPH; the sequence is SK. Residue Cys187 is the Thioimide intermediate of the active site. The active-site Proton donor is Asp194. 226–227 is a binding site for substrate; the sequence is HE. An NADPH-binding site is contributed by 255–256; sequence RG.

Belongs to the GTP cyclohydrolase I family. QueF type 2 subfamily. In terms of assembly, homodimer.

It is found in the cytoplasm. The catalysed reaction is 7-aminomethyl-7-carbaguanine + 2 NADP(+) = 7-cyano-7-deazaguanine + 2 NADPH + 3 H(+). Its pathway is tRNA modification; tRNA-queuosine biosynthesis. Functionally, catalyzes the NADPH-dependent reduction of 7-cyano-7-deazaguanine (preQ0) to 7-aminomethyl-7-deazaguanine (preQ1). In Histophilus somni (strain 129Pt) (Haemophilus somnus), this protein is NADPH-dependent 7-cyano-7-deazaguanine reductase.